A 237-amino-acid polypeptide reads, in one-letter code: Ribose-5-phosphate isomerase A (237 aa).

Substrate contacts are provided by residues 28–31, 83–86, and 97–100; these read SGST, DGAD, and KGRG. The Proton acceptor role is filled by E106. K124 contributes to the substrate binding site.

It belongs to the ribose 5-phosphate isomerase family. Homodimer.

It catalyses the reaction aldehydo-D-ribose 5-phosphate = D-ribulose 5-phosphate. Its pathway is carbohydrate degradation; pentose phosphate pathway; D-ribose 5-phosphate from D-ribulose 5-phosphate (non-oxidative stage): step 1/1. Its function is as follows. Catalyzes the reversible conversion of ribose-5-phosphate to ribulose 5-phosphate. This chain is Ribose-5-phosphate isomerase A, found in Thermomicrobium roseum (strain ATCC 27502 / DSM 5159 / P-2).